The primary structure comprises 506 residues: ATP synthase subunit alpha (506 aa).

171–178 serves as a coordination point for ATP; that stretch reads GDRQTGKT.

This sequence belongs to the ATPase alpha/beta chains family. F-type ATPases have 2 components, CF(1) - the catalytic core - and CF(0) - the membrane proton channel. CF(1) has five subunits: alpha(3), beta(3), gamma(1), delta(1), epsilon(1). CF(0) has four main subunits: a(1), b(1), b'(1) and c(9-12).

It is found in the cellular thylakoid membrane. It carries out the reaction ATP + H2O + 4 H(+)(in) = ADP + phosphate + 5 H(+)(out). In terms of biological role, produces ATP from ADP in the presence of a proton gradient across the membrane. The alpha chain is a regulatory subunit. The protein is ATP synthase subunit alpha of Nostoc sp. (strain PCC 7120 / SAG 25.82 / UTEX 2576).